Here is an 828-residue protein sequence, read N- to C-terminus: Sarcolemmal membrane-associated protein (828 aa).

Positions 1–163 are necessary for targeting to centrosomes; that stretch reads MPSALAIFTC…AANTPSMYSQ (163 aa). The Cytoplasmic segment spans residues 1 to 802; that stretch reads MPSALAIFTC…REKGNNKPWP (802 aa). In terms of domain architecture, FHA spans 28–85; that stretch reads IKIGRSVARCRPAQNNATFDCKVLSRNHALVWFDHKTGKFYLQDTKSSNGTFINSQRL. Serine 148 bears the Phosphoserine mark. 2 coiled-coil regions span residues 167–202 and 230–388; these read QLSQYLQEALHREQMLEQKLATLQRLLAITQEASDT and NQTE…QEKT. A helical; Anchor for type IV membrane protein membrane pass occupies residues 339–359; sequence KKELQHKIDEMEEKEQELQAK. Residues 433–446 show a composition bias toward basic and acidic residues; that stretch reads KLSKENQTRAKESD. The interval 433–467 is disordered; that stretch reads KLSKENQTRAKESDFSDTLSPSKEKSSDDTTDAQM. 2 positions are modified to phosphoserine: serine 448 and serine 452. A coiled-coil region spans residues 477 to 799; the sequence is AKVSLLKDDL…KLLREKGNNK (323 aa). Residues 803–823 form a helical; Anchor for type IV membrane protein membrane-spanning segment; that stretch reads WMPMLAALVAVTAIVLYVPGL. Residues 824-828 are Extracellular-facing; the sequence is ARASP.

This sequence belongs to the SLMAP family. Homodimer. Interacts with myosin. Interacts with SIKE1 and both associate with the STRIPAK core complex composed of PP2A catalytic and scaffolding subunits, the striatins (PP2A regulatory subunits), the striatin-associated proteins MOB4, STRIP1 and STRIP2, PDCD10 and members of the STE20 kinases, such as STK24 and STK26. Interacts (via FHA domain) with STK3 (when phosphorylated); the interaction associates STK3 with the STRIPAK complex.

Its subcellular location is the cell membrane. The protein localises to the sarcolemma. It is found in the cytoplasm. It localises to the myofibril. The protein resides in the sarcomere. Its subcellular location is the m line. The protein localises to the z line. It is found in the cytoskeleton. It localises to the microtubule organizing center. The protein resides in the centrosome. Its subcellular location is the endoplasmic reticulum membrane. The protein localises to the mitochondrion membrane. Associates with the striatin-interacting phosphatase and kinase (STRIPAK) core complex, forming the extended (SIKE1:SLMAP)STRIPAK complex. The (SIKE1:SLMAP)STRIPAK complex dephosphorylates STK3 leading to the inhibition of Hippo signaling and the control of cell growth. May play a role during myoblast fusion. The protein is Sarcolemmal membrane-associated protein of Homo sapiens (Human).